The primary structure comprises 188 residues: GMP synthase [glutamine-hydrolyzing] subunit A (188 aa).

The region spanning 2 to 188 is the Glutamine amidotransferase type-1 domain; that stretch reads KVGLVYYGGQ…FKNFLGVCRK (187 aa). The active-site Nucleophile is Cys-79. Active-site residues include His-166 and Glu-168.

In terms of assembly, heterodimer composed of a glutamine amidotransferase subunit (A) and a GMP-binding subunit (B).

The catalysed reaction is XMP + L-glutamine + ATP + H2O = GMP + L-glutamate + AMP + diphosphate + 2 H(+). The protein operates within purine metabolism; GMP biosynthesis; GMP from XMP (L-Gln route): step 1/1. Catalyzes the synthesis of GMP from XMP. This is GMP synthase [glutamine-hydrolyzing] subunit A from Saccharolobus solfataricus (strain ATCC 35092 / DSM 1617 / JCM 11322 / P2) (Sulfolobus solfataricus).